The primary structure comprises 187 residues: Hypoxanthine/guanine phosphoribosyltransferase (187 aa).

The protein belongs to the purine/pyrimidine phosphoribosyltransferase family. Archaeal HPRT subfamily. Homodimer.

It localises to the cytoplasm. It catalyses the reaction IMP + diphosphate = hypoxanthine + 5-phospho-alpha-D-ribose 1-diphosphate. It carries out the reaction GMP + diphosphate = guanine + 5-phospho-alpha-D-ribose 1-diphosphate. It participates in purine metabolism; IMP biosynthesis via salvage pathway; IMP from hypoxanthine: step 1/1. Catalyzes a salvage reaction resulting in the formation of IMP that is energically less costly than de novo synthesis. The protein is Hypoxanthine/guanine phosphoribosyltransferase of Methanocorpusculum labreanum (strain ATCC 43576 / DSM 4855 / Z).